We begin with the raw amino-acid sequence, 292 residues long: Ferric aerobactin-binding protein VatD (292 aa).

An N-terminal signal peptide occupies residues 1–12 (MLSAALAFNSYA). Residues 30–292 (KVVALDWVLT…HITGRLTQPQ (263 aa)) form the Fe/B12 periplasmic-binding domain. Positions 61, 77, 118, 185, 213, 215, 269, and 271 each coordinate desferrioxamine B.

The protein belongs to the bacterial solute-binding protein 8 family. As to quaternary structure, the complex is composed of two ATP-binding proteins (VatC), two transmembrane proteins (VatB) and a solute-binding protein (VatD).

The protein resides in the periplasm. Part of the ABC transporter complex VatCDB involved in the import of iron(3+)-complexed aerobactin, a citrate-hydroxamate siderophore produced by other bacteria. Binds the iron(3+)-aerobactin complex and transfers it to the membrane-bound permease. Functions in the import of iron(3+)-complexed vulnibactin, a catecholate siderophore synthesized by V.vulnificus, in the absence of FatB. The protein is Ferric aerobactin-binding protein VatD of Vibrio vulnificus.